A 225-amino-acid polypeptide reads, in one-letter code: ATP-dependent dethiobiotin synthetase BioD (225 aa).

An ATP-binding site is contributed by 12 to 17 (EVGKTY). A Mg(2+)-binding site is contributed by T16. K37 is a catalytic residue. Residue S41 participates in substrate binding. Residues D52, 114 to 117 (EGAG), and 174 to 175 (NC) each bind ATP. Mg(2+) contacts are provided by D52 and E114.

Belongs to the dethiobiotin synthetase family. As to quaternary structure, homodimer. Requires Mg(2+) as cofactor.

The protein localises to the cytoplasm. It carries out the reaction (7R,8S)-7,8-diammoniononanoate + CO2 + ATP = (4R,5S)-dethiobiotin + ADP + phosphate + 3 H(+). It functions in the pathway cofactor biosynthesis; biotin biosynthesis; biotin from 7,8-diaminononanoate: step 1/2. Catalyzes a mechanistically unusual reaction, the ATP-dependent insertion of CO2 between the N7 and N8 nitrogen atoms of 7,8-diaminopelargonic acid (DAPA, also called 7,8-diammoniononanoate) to form a ureido ring. In Francisella tularensis subsp. novicida (strain U112), this protein is ATP-dependent dethiobiotin synthetase BioD.